Here is a 342-residue protein sequence, read N- to C-terminus: Phenylalanine--tRNA ligase alpha subunit (342 aa).

Glu260 contributes to the Mg(2+) binding site.

The protein belongs to the class-II aminoacyl-tRNA synthetase family. Phe-tRNA synthetase alpha subunit type 1 subfamily. In terms of assembly, tetramer of two alpha and two beta subunits. It depends on Mg(2+) as a cofactor.

It localises to the cytoplasm. The catalysed reaction is tRNA(Phe) + L-phenylalanine + ATP = L-phenylalanyl-tRNA(Phe) + AMP + diphosphate + H(+). The polypeptide is Phenylalanine--tRNA ligase alpha subunit (Nocardia farcinica (strain IFM 10152)).